A 140-amino-acid chain; its full sequence is Protein KRTCAP2 homolog (140 aa).

Transmembrane regions (helical) follow at residues 11-31 (LLSS…LRFC), 40-60 (LNVL…LTCV), 74-94 (AKLV…AGIV), and 98-118 (CATT…RISI).

It belongs to the KRTCAP2 family. In terms of assembly, component of the oligosaccharyltransferase (OST) complex.

Its subcellular location is the membrane. In terms of biological role, subunit of the oligosaccharyl transferase (OST) complex that catalyzes the initial transfer of a defined glycan (Glc(3)Man(9)GlcNAc(2) in eukaryotes) from the lipid carrier dolichol-pyrophosphate to an asparagine residue within an Asn-X-Ser/Thr consensus motif in nascent polypeptide chains, the first step in protein N-glycosylation. N-glycosylation occurs cotranslationally and the complex associates with the Sec61 complex at the channel-forming translocon complex that mediates protein translocation across the endoplasmic reticulum (ER). All subunits are required for a maximal enzyme activity. In Drosophila pseudoobscura pseudoobscura (Fruit fly), this protein is Protein KRTCAP2 homolog.